Here is an 845-residue protein sequence, read N- to C-terminus: Matrin-3 (845 aa).

At Ser2 the chain carries N-acetylserine. Residue Lys3 is modified to N6-acetyllysine; alternate. Residue Lys3 forms a Glycyl lysine isopeptide (Lys-Gly) (interchain with G-Cter in SUMO2); alternate linkage. Phosphoserine occurs at positions 4, 9, 14, 22, 41, 118, and 126. Residues Lys132 and Lys146 each participate in a glycyl lysine isopeptide (Lys-Gly) (interchain with G-Cter in SUMO2) cross-link. Disordered regions lie at residues 147–174 and 187–213; these read RRRT…YRVP and DSFD…ESGY. Thr150 carries the phosphothreonine modification. At Ser157 the chain carries Phosphoserine. At Tyr158 the chain carries Phosphotyrosine. The segment covering 160–174 has biased composition (basic and acidic residues); it reads RDGRSATREPPYRVP. Residues Ser164, Ser188, and Ser195 each carry the phosphoserine modification. The span at 201 to 213 shows a compositional bias: basic and acidic residues; that stretch reads DYDHGSRSQESGY. Tyr202 carries the phosphotyrosine modification. A phosphoserine mark is found at Ser206, Ser208, and Ser211. Tyr219 bears the Phosphotyrosine mark. Position 234 is a phosphoserine (Ser234). Lys245 is covalently cross-linked (Glycyl lysine isopeptide (Lys-Gly) (interchain with G-Cter in SUMO2)). Residue Ser264 is modified to Phosphoserine. Residue Lys269 forms a Glycyl lysine isopeptide (Lys-Gly) (interchain with G-Cter in SUMO2) linkage. Position 275 is a phosphoserine (Ser275). Residues 342–394 are disordered; sequence PFMLQQSTNPAPGILGPPPPSFHLGGPAVGPRGNLGAGNGNLQGPRHMQKGRV. One can recognise an RRM 1 domain in the interval 398–473; that stretch reads RVVHIMDFQR…KPVRVHLSQK (76 aa). Glycyl lysine isopeptide (Lys-Gly) (interchain with G-Cter in SUMO2) cross-links involve residues Lys478, Lys487, and Lys491. The RRM 2 domain occupies 496 to 571; sequence RVIHLSNLPH…RCVKVDLSEK (76 aa). A phosphoserine mark is found at Ser509 and Ser511. Lys515 participates in a covalent cross-link: Glycyl lysine isopeptide (Lys-Gly) (interchain with G-Cter in SUMO2). Lys522 is subject to N6-acetyllysine; alternate. Residue Lys522 forms a Glycyl lysine isopeptide (Lys-Gly) (interchain with G-Cter in SUMO2); alternate linkage. Ser533 carries the phosphoserine modification. Glycyl lysine isopeptide (Lys-Gly) (interchain with G-Cter in SUMO2) cross-links involve residues Lys554 and Lys555. Position 571 is an N6-acetyllysine (Lys571). The tract at residues 588 to 785 is disordered; that stretch reads KKDKSRKRSY…EYRIGPYQPN (198 aa). A phosphoserine mark is found at Ser596, Ser598, Ser604, and Ser606. Positions 600–643 are enriched in basic and acidic residues; it reads DGKESPSDKKSKTDGAQKTENPAEGKEQEEKSGEDGEKDTKDDQ. Residues Lys617 and Lys630 each participate in a glycyl lysine isopeptide (Lys-Gly) (interchain with G-Cter in SUMO2) cross-link. Acidic residues predominate over residues 653–665; that stretch reads ESEDELLVDEEEA. A phosphoserine mark is found at Ser654, Ser671, Ser673, and Ser674. Residue Thr679 is modified to Phosphothreonine. A Phosphoserine modification is found at Ser689. Over residues 689 to 704 the composition is skewed to basic and acidic residues; that stretch reads SDGKKEPSDKAVKKDA. The Nuclear localization signal signature appears at 708–716; sequence SKKKLKKVD. Glycyl lysine isopeptide (Lys-Gly) (interchain with G-Cter in SUMO2) cross-links involve residues Lys717 and Lys734. Thr739 is modified (phosphothreonine). Phosphoserine is present on residues Ser745, Ser757, and Ser760. Residues 765–778 show a composition bias toward basic and acidic residues; it reads DENKEDYTIPDEYR. Lys768 is covalently cross-linked (Glycyl lysine isopeptide (Lys-Gly) (interchain with G-Cter in SUMO2)). Residues 799–830 form a Matrin-type zinc finger; that stretch reads FYCKLCSLFYTNEEVAKNTHCSSLPHYQKLKK. Lys834 is modified (N6-acetyllysine; alternate). Lys834 is covalently cross-linked (Glycyl lysine isopeptide (Lys-Gly) (interchain with G-Cter in SUMO2); alternate).

As to quaternary structure, part of a complex consisting of SFPQ, NONO and MATR3. Interacts with AGO1 and AGO2. Part of a complex composed at least of ASH2L, EMSY, HCFC1, HSPA8, CCAR2, MATR3, MKI67, RBBP5, TUBB2A, WDR5 and ZNF335; this complex may have a histone H3-specific methyltransferase activity. Interacts with TARDBP. Part of the HDP-RNP complex composed of at least HEXIM1, PRKDC, XRCC5, XRCC6, paraspeckle proteins (SFPQ, NONO, PSPC1, RBM14, and MATR3) and NEAT1 RNA. Interacts with FUS. Interacts with IGF2BP1. Interacts with IGF2BP2 and IGF2BP3. Interacts with RBPMS.

Its subcellular location is the nucleus matrix. Its function is as follows. May play a role in transcription or may interact with other nuclear matrix proteins to form the internal fibrogranular network. In association with the SFPQ-NONO heteromer may play a role in nuclear retention of defective RNAs. Plays a role in the regulation of DNA virus-mediated innate immune response by assembling into the HDP-RNP complex, a complex that serves as a platform for IRF3 phosphorylation and subsequent innate immune response activation through the cGAS-STING pathway. Binds to N6-methyladenosine (m6A)-containing mRNAs and contributes to MYC stability by binding to m6A-containing MYC mRNAs. May bind to specific miRNA hairpins. This Rattus norvegicus (Rat) protein is Matrin-3 (Matr3).